Here is a 438-residue protein sequence, read N- to C-terminus: Thymidine phosphorylase (438 aa).

This sequence belongs to the thymidine/pyrimidine-nucleoside phosphorylase family. Homodimer.

It carries out the reaction thymidine + phosphate = 2-deoxy-alpha-D-ribose 1-phosphate + thymine. It participates in pyrimidine metabolism; dTMP biosynthesis via salvage pathway; dTMP from thymine: step 1/2. Functionally, the enzymes which catalyze the reversible phosphorolysis of pyrimidine nucleosides are involved in the degradation of these compounds and in their utilization as carbon and energy sources, or in the rescue of pyrimidine bases for nucleotide synthesis. The sequence is that of Thymidine phosphorylase from Burkholderia orbicola (strain MC0-3).